The sequence spans 392 residues: Homoserine O-acetyltransferase (392 aa).

One can recognise an AB hydrolase-1 domain in the interval 52–356 (NVVVVLHALT…ICGHDGFLVE (305 aa)). Serine 157 acts as the Nucleophile in catalysis. Arginine 227 contacts substrate. Catalysis depends on residues aspartate 320 and histidine 350. Aspartate 351 serves as a coordination point for substrate. Residues 373–392 (SQSAGPGGAGPGSRKGTTRR) are disordered.

This sequence belongs to the AB hydrolase superfamily. MetX family. As to quaternary structure, homodimer.

Its subcellular location is the cytoplasm. The catalysed reaction is L-homoserine + acetyl-CoA = O-acetyl-L-homoserine + CoA. It functions in the pathway amino-acid biosynthesis; L-methionine biosynthesis via de novo pathway; O-acetyl-L-homoserine from L-homoserine: step 1/1. Transfers an acetyl group from acetyl-CoA to L-homoserine, forming acetyl-L-homoserine. The protein is Homoserine O-acetyltransferase of Mycolicibacterium paratuberculosis (strain ATCC BAA-968 / K-10) (Mycobacterium paratuberculosis).